Consider the following 940-residue polypeptide: Isoleucine--tRNA ligase (940 aa).

Residues 58-68 (PYANGSIHIGH) carry the 'HIGH' region motif. E564 is an L-isoleucyl-5'-AMP binding site. The short motif at 605–609 (KMSKS) is the 'KMSKS' region element. K608 contacts ATP. Zn(2+) contacts are provided by C903, C906, C923, and C926.

Belongs to the class-I aminoacyl-tRNA synthetase family. IleS type 1 subfamily. In terms of assembly, monomer. The cofactor is Zn(2+).

The protein resides in the cytoplasm. It carries out the reaction tRNA(Ile) + L-isoleucine + ATP = L-isoleucyl-tRNA(Ile) + AMP + diphosphate. Functionally, catalyzes the attachment of isoleucine to tRNA(Ile). As IleRS can inadvertently accommodate and process structurally similar amino acids such as valine, to avoid such errors it has two additional distinct tRNA(Ile)-dependent editing activities. One activity is designated as 'pretransfer' editing and involves the hydrolysis of activated Val-AMP. The other activity is designated 'posttransfer' editing and involves deacylation of mischarged Val-tRNA(Ile). The sequence is that of Isoleucine--tRNA ligase from Shewanella sp. (strain ANA-3).